The chain runs to 263 residues: Methylesterase 3 (263 aa).

Ser85 serves as the catalytic Acyl-ester intermediate. Active-site charge relay system residues include Asp213 and His241.

It belongs to the AB hydrolase superfamily. Methylesterase family.

The enzyme catalyses methyl (indol-3-yl)acetate + H2O = (indol-3-yl)acetate + methanol + H(+). The catalysed reaction is methyl (-)-jasmonate + H2O = jasmonate + methanol + H(+). It participates in plant hormone biosynthesis. The protein operates within lipid metabolism; oxylipin biosynthesis. Functionally, methylesterase shown to have carboxylesterase activity, methyl indole-3-acetic acid (MeIAA) esterase activity and methyl jasmonate (MeJA) esterase activity in vitro. The polypeptide is Methylesterase 3 (Arabidopsis thaliana (Mouse-ear cress)).